The chain runs to 135 residues: Protein PsiE homolog (135 aa).

The next 4 membrane-spanning stretches (helical) occupy residues 20–40 (VGLL…TIHL), 54–74 (YLLI…ALIV), 82–102 (HFPL…LIIV), and 107–127 (PIDT…LYLA).

It belongs to the PsiE family.

It is found in the cell inner membrane. The protein is Protein PsiE homolog of Serratia proteamaculans (strain 568).